The sequence spans 427 residues: Trigger factor (427 aa).

A PPIase FKBP-type domain is found at Gly-163–Pro-248.

It belongs to the FKBP-type PPIase family. Tig subfamily.

The protein localises to the cytoplasm. It catalyses the reaction [protein]-peptidylproline (omega=180) = [protein]-peptidylproline (omega=0). Involved in protein export. Acts as a chaperone by maintaining the newly synthesized protein in an open conformation. Functions as a peptidyl-prolyl cis-trans isomerase. In Streptococcus pneumoniae (strain CGSP14), this protein is Trigger factor.